Here is a 92-residue protein sequence, read N- to C-terminus: Signal recognition particle 19 kDa protein (92 aa).

Belongs to the SRP19 family. Part of the signal recognition particle protein translocation system, which is composed of SRP and FtsY. Archaeal SRP consists of a 7S RNA molecule of 300 nucleotides and two protein subunits: SRP54 and SRP19.

The protein resides in the cytoplasm. Involved in targeting and insertion of nascent membrane proteins into the cytoplasmic membrane. Binds directly to 7S RNA and mediates binding of the 54 kDa subunit of the SRP. This Methanosphaera stadtmanae (strain ATCC 43021 / DSM 3091 / JCM 11832 / MCB-3) protein is Signal recognition particle 19 kDa protein.